Consider the following 260-residue polypeptide: Triosephosphate isomerase (260 aa).

A substrate-binding site is contributed by 11 to 13 (NWK). The active-site Electrophile is His103. The active-site Proton acceptor is the Glu175. Residues Gly181, Ser220, and 241 to 242 (GG) each bind substrate.

It belongs to the triosephosphate isomerase family. In terms of assembly, homodimer.

The protein localises to the cytoplasm. The enzyme catalyses D-glyceraldehyde 3-phosphate = dihydroxyacetone phosphate. The protein operates within carbohydrate biosynthesis; gluconeogenesis. It participates in carbohydrate degradation; glycolysis; D-glyceraldehyde 3-phosphate from glycerone phosphate: step 1/1. Functionally, involved in the gluconeogenesis. Catalyzes stereospecifically the conversion of dihydroxyacetone phosphate (DHAP) to D-glyceraldehyde-3-phosphate (G3P). This Shewanella frigidimarina (strain NCIMB 400) protein is Triosephosphate isomerase.